Consider the following 257-residue polypeptide: Protein orai-2 (257 aa).

4 helical membrane-spanning segments follow: residues 67–84 (TSAL…EVQL), 95–115 (LIAF…ALLI), 149–169 (LAWG…VVLL), and 199–219 (AALV…VFTI).

The protein belongs to the Orai family.

The protein localises to the membrane. Ca(2+) release-activated Ca(2+)-like (CRAC-like) channel subunit which mediates Ca(2+) influx and increase in Ca(2+)-selective current by synergy with the Ca(2+) sensor, STIM1. The sequence is that of Protein orai-2 (ORAI2) from Gallus gallus (Chicken).